The chain runs to 305 residues: PI-PLC X domain-containing protein 2 (305 aa).

The PI-PLC X-box domain occupies 42–215 (HLHNLPLSNL…NCQVLIFYHC (174 aa)). Active-site residues include histidine 57 and histidine 132.

Widely expressed.

The protein resides in the nucleus. It carries out the reaction a 1,2-diacyl-sn-glycero-3-phospho-(1D-myo-inositol) + H2O = 1D-myo-inositol 1-phosphate + a 1,2-diacyl-sn-glycerol + H(+). Functionally, catalyzes the hydrolysis of inositol from phosphatidylinositol (1,2-diacyl-sn-glycero-3-phospho-(1D-myo-inositol), PI). Could also hydrolyze various multi-phosphorylated derivatives of PI, such as phosphatidylinositol-4,5 bisphosphate (PIP2), releasing inositol-1,4,5-trisphosphate (IP3) and the protein kinase C activator diacylglycerol (DAG), therefore mediating cell signaling. This is PI-PLC X domain-containing protein 2 (PLCXD2) from Homo sapiens (Human).